The following is a 64-amino-acid chain: Large ribosomal subunit protein bL32 (64 aa).

The segment at 1–36 (MAVQKSRVTPSRRGQRRSHDALSAKQLSTDPTTGEV) is disordered.

It belongs to the bacterial ribosomal protein bL32 family.

The sequence is that of Large ribosomal subunit protein bL32 from Stenotrophomonas maltophilia (strain K279a).